The chain runs to 137 residues: Large ribosomal subunit protein uL16 (137 aa).

It belongs to the universal ribosomal protein uL16 family. As to quaternary structure, part of the 50S ribosomal subunit.

Its function is as follows. Binds 23S rRNA and is also seen to make contacts with the A and possibly P site tRNAs. This is Large ribosomal subunit protein uL16 from Rhizobium meliloti (strain 1021) (Ensifer meliloti).